Consider the following 94-residue polypeptide: MSDAHMETVHVIVKGKVQGVGYRHAAVRRAHMLGVTGWVQNLPDGTVEAVVQGTADQVDHMLEWLRRGPPAAQVRELASERSFEEKRYKHFAQL.

The 87-residue stretch at 8–94 folds into the Acylphosphatase-like domain; sequence TVHVIVKGKV…EKRYKHFAQL (87 aa). Active-site residues include arginine 23 and asparagine 41.

The protein belongs to the acylphosphatase family.

The catalysed reaction is an acyl phosphate + H2O = a carboxylate + phosphate + H(+). The chain is Acylphosphatase (acyP) from Bordetella parapertussis (strain 12822 / ATCC BAA-587 / NCTC 13253).